Consider the following 244-residue polypeptide: 5-oxoprolinase subunit A (244 aa).

This sequence belongs to the LamB/PxpA family. In terms of assembly, forms a complex composed of PxpA, PxpB and PxpC.

The catalysed reaction is 5-oxo-L-proline + ATP + 2 H2O = L-glutamate + ADP + phosphate + H(+). Its function is as follows. Catalyzes the cleavage of 5-oxoproline to form L-glutamate coupled to the hydrolysis of ATP to ADP and inorganic phosphate. In Escherichia coli O157:H7, this protein is 5-oxoprolinase subunit A.